A 760-amino-acid chain; its full sequence is BMP/retinoic acid-inducible neural-specific protein 1 (760 aa).

A signal peptide spans 1-16 (MNWRFVELLYFLFVWG). One can recognise an MACPF domain in the interval 68 to 251 (RYKIYREFAR…FVQSALSYIM (184 aa)). Asn156, Asn433, Asn443, Asn553, Asn599, Asn630, and Asn676 each carry an N-linked (GlcNAc...) asparagine glycan.

This sequence belongs to the BRINP family.

It is found in the cytoplasm. In terms of biological role, plays a role in neurogenesis and brain development. May suppress cell cycle progression in postmitotic neurons by inhibiting G1/S transition. The protein is BMP/retinoic acid-inducible neural-specific protein 1 (Brinp1) of Rattus norvegicus (Rat).